The chain runs to 71 residues: Heat-stable enterotoxin II (71 aa).

Residues 1–23 (MKKNIAFLLASMFVFSIATNAYA) form the signal peptide. Cystine bridges form between C33/C71 and C44/C59.

The protein resides in the secreted. Its function is as follows. Toxin which activates the particulate form of guanylate cyclase and increases cyclic GMP levels within the host intestinal epithelial cells. The polypeptide is Heat-stable enterotoxin II (stiI) (Escherichia coli).